The following is a 492-amino-acid chain: Dipeptide and tripeptide permease A (492 aa).

Residues 1-20 (MSTANKHPEAASLNAFKQPR) lie on the Cytoplasmic side of the membrane. A helical membrane pass occupies residues 21–43 (SFYLIFSIELWERFGYYGLQGIM). Residues 44 to 58 (AVYLVKMLGMSEAQS) are Periplasmic-facing. Residues 59–79 (ITLFASFSALVYGLIAVGGWL) form a helical membrane-spanning segment. Residues 80–88 (GDKVLGTKR) lie on the Cytoplasmic side of the membrane. Residues 89–109 (VIVLGTLVLALGYALVAWSGH) traverse the membrane as a helical segment. Residue D110 is a topological domain, periplasmic. Residues 111–131 (IAMIYFGMATIAVGNGLFKAN) form a helical membrane-spanning segment. Topologically, residues 132–152 (PSSLLSTCYEKDDPRLDGAFT) are cytoplasmic. The chain crosses the membrane as a helical span at residues 153-173 (MYYMAINIGSFFSMLATPWLA). The Periplasmic portion of the chain corresponds to 174-178 (AQFGW). Residues 179 to 199 (STAFGLSFVGMLITLVNFMFF) form a helical membrane-spanning segment. Topologically, residues 200-217 (RKWVKDHGSKPDFAPLNM) are cytoplasmic. A helical transmembrane segment spans residues 218-238 (GKLLVTLLGIAVMIAAATWLL). The Periplasmic portion of the chain corresponds to 239–245 (HNQDIAR). Residues 246-266 (MVLGAVAVAIVVIFTKEALTL) traverse the membrane as a helical segment. The Cytoplasmic portion of the chain corresponds to 267–273 (KGAARRK). The helical transmembrane segment at 274–294 (MIVAFLLMLEAIVFFVLYMQM) threads the bilayer. Residues 295-319 (PTSLNFFAIRNVEHSLLGIAFQPEQ) are Periplasmic-facing. Residues 320–340 (FQALNPFWIMIFSPLLAALYN) traverse the membrane as a helical segment. Over 341 to 351 (KLGDRMPMPHK) the chain is Cytoplasmic. A helical transmembrane segment spans residues 352–372 (FALGMVLCSAAFLVLPLGASL). Residues 373–377 (ANKMG) are Periplasmic-facing. A helical membrane pass occupies residues 378-398 (IVSVGWLVLSYALQSVGELMI). Over 399-413 (SGLGLAMVAQLVPQR) the chain is Cytoplasmic. A helical membrane pass occupies residues 414–434 (LMGFIMGSWFLTTAGAAMVAG). The Periplasmic portion of the chain corresponds to 435–458 (KVANLMAVPENITNPLLSLHVYGD). Residues 459 to 479 (IFFKIGITTGVIAVLMILAAP) traverse the membrane as a helical segment. Residues 480-492 (LLNRMTQDEQPGV) lie on the Cytoplasmic side of the membrane.

The protein belongs to the major facilitator superfamily. Proton-dependent oligopeptide transporter (POT/PTR) (TC 2.A.17) family. DtpA subfamily.

It localises to the cell inner membrane. Functionally, proton-dependent permease that transports di- and tripeptides. The sequence is that of Dipeptide and tripeptide permease A from Erwinia pyrifoliae (strain DSM 12163 / CIP 106111 / Ep16/96).